Here is a 129-residue protein sequence, read N- to C-terminus: Phosphoribosyl-AMP cyclohydrolase (129 aa).

Residue Asp-76 coordinates Mg(2+). Cys-77 contributes to the Zn(2+) binding site. Positions 78 and 80 each coordinate Mg(2+). Zn(2+) is bound by residues Cys-97 and Cys-104.

Belongs to the PRA-CH family. Homodimer. Mg(2+) is required as a cofactor. The cofactor is Zn(2+).

The protein localises to the cytoplasm. The enzyme catalyses 1-(5-phospho-beta-D-ribosyl)-5'-AMP + H2O = 1-(5-phospho-beta-D-ribosyl)-5-[(5-phospho-beta-D-ribosylamino)methylideneamino]imidazole-4-carboxamide. The protein operates within amino-acid biosynthesis; L-histidine biosynthesis; L-histidine from 5-phospho-alpha-D-ribose 1-diphosphate: step 3/9. Its function is as follows. Catalyzes the hydrolysis of the adenine ring of phosphoribosyl-AMP. The chain is Phosphoribosyl-AMP cyclohydrolase from Polaromonas naphthalenivorans (strain CJ2).